The sequence spans 214 residues: MEPLTVVEGLVVPLDRANVDTDAIIPKQFLKSIKRTGFGPNLFDEWRYLDHGEPGKDCRHRPLNPEFVLNQPRYQGANILLARDNFGCGSSREHAVWALVDDGFRVVIAPSFADIFHSNAFKNGLLPIILDEDSVTTLFKDTEATLGYRLRIDLPAQEVTTPEGKVMPFTIDEFRKHCLMEGLDEIGLTLQYRDEIRAYEERRQVEAPWLFEKG.

This sequence belongs to the LeuD family. LeuD type 1 subfamily. Heterodimer of LeuC and LeuD.

The enzyme catalyses (2R,3S)-3-isopropylmalate = (2S)-2-isopropylmalate. It functions in the pathway amino-acid biosynthesis; L-leucine biosynthesis; L-leucine from 3-methyl-2-oxobutanoate: step 2/4. Its function is as follows. Catalyzes the isomerization between 2-isopropylmalate and 3-isopropylmalate, via the formation of 2-isopropylmaleate. This Nitrosococcus oceani (strain ATCC 19707 / BCRC 17464 / JCM 30415 / NCIMB 11848 / C-107) protein is 3-isopropylmalate dehydratase small subunit.